The chain runs to 584 residues: Transcriptional regulator STP2 (584 aa).

2 stretches are compositionally biased toward polar residues: residues 1-11 (MSVAITSNNNK) and 180-202 (AESN…SISD). 2 disordered regions span residues 1-22 (MSVA…PHLK) and 161-214 (KMHP…STVS). A compositionally biased stretch (low complexity) spans 203–214 (SPSHSETESTVS). The C2H2-type zinc-finger motif lies at 225–247 (FKCPSCDAEFRVRGYLTRHMKKH). 2 disordered regions span residues 381-496 (RQKK…PQQP) and 553-584 (QYQP…SMYF). Residues 394-407 (SESSIQSQESESSI) show a composition bias toward low complexity. Residues 431-441 (QHQHQHHHHVQ) are compositionally biased toward basic residues. Low complexity predominate over residues 442–480 (NQHQQHVNQQQSIATPASIYSSSASSTSSYESTHSPYTP). The segment covering 481 to 496 (QSSRSPLSHMYNPQQP) has biased composition (polar residues).

Proteolytically cleaved: activated by the amino acid-induced proteolytic removal of an N-terminal inhibitory domain.

The protein localises to the cell membrane. Its subcellular location is the nucleus. In terms of biological role, transcription factor involved in the regulation of gene expression in response to extracellular amino acid levels. Synthesized as latent cytoplasmic precursor, which, upon a signal initiated by the plasma membrane SPS amino acid sensor system (including CSY1 and CSH3), becomes proteolytically activated and relocates to the nucleus, where it induces the expression of SPS-sensor-regulated genes. Required for efficient alkalinization through the release of ammonia from the cells produced during the breakdown of amino acids, and subsequent switch to the hyphal form. The protein is Transcriptional regulator STP2 (STP2) of Candida albicans (strain SC5314 / ATCC MYA-2876) (Yeast).